The sequence spans 179 residues: Small ribosomal subunit protein uS5c (179 aa).

In terms of domain architecture, S5 DRBM spans 26–89; the sequence is FVERLIKISR…TDGRKNLIDV (64 aa).

This sequence belongs to the universal ribosomal protein uS5 family. Part of the 30S ribosomal subunit. Contacts protein S4.

Its subcellular location is the plastid. It localises to the chloroplast. In terms of biological role, with S4 and S12 plays an important role in translational accuracy. In Thalassiosira pseudonana (Marine diatom), this protein is Small ribosomal subunit protein uS5c (rps5).